We begin with the raw amino-acid sequence, 210 residues long: Urease accessory protein UreF (210 aa).

Belongs to the UreF family. As to quaternary structure, ureD, UreF and UreG form a complex that acts as a GTP-hydrolysis-dependent molecular chaperone, activating the urease apoprotein by helping to assemble the nickel containing metallocenter of UreC. The UreE protein probably delivers the nickel.

It localises to the cytoplasm. Functionally, required for maturation of urease via the functional incorporation of the urease nickel metallocenter. The sequence is that of Urease accessory protein UreF from Cereibacter sphaeroides (strain KD131 / KCTC 12085) (Rhodobacter sphaeroides).